A 319-amino-acid chain; its full sequence is Acetyl-coenzyme A carboxylase carboxyl transferase subunit alpha (319 aa).

Positions 31–292 (EIDSAIRSLR…KTYLSRQLSE (262 aa)) constitute a CoA carboxyltransferase C-terminal domain.

The protein belongs to the AccA family. As to quaternary structure, acetyl-CoA carboxylase is a heterohexamer composed of biotin carboxyl carrier protein (AccB), biotin carboxylase (AccC) and two subunits each of ACCase subunit alpha (AccA) and ACCase subunit beta (AccD).

It is found in the cytoplasm. The enzyme catalyses N(6)-carboxybiotinyl-L-lysyl-[protein] + acetyl-CoA = N(6)-biotinyl-L-lysyl-[protein] + malonyl-CoA. It functions in the pathway lipid metabolism; malonyl-CoA biosynthesis; malonyl-CoA from acetyl-CoA: step 1/1. Functionally, component of the acetyl coenzyme A carboxylase (ACC) complex. First, biotin carboxylase catalyzes the carboxylation of biotin on its carrier protein (BCCP) and then the CO(2) group is transferred by the carboxyltransferase to acetyl-CoA to form malonyl-CoA. The chain is Acetyl-coenzyme A carboxylase carboxyl transferase subunit alpha from Rhodopirellula baltica (strain DSM 10527 / NCIMB 13988 / SH1).